Here is a 73-residue protein sequence, read N- to C-terminus: UPF0499 protein NFIA_054990 (73 aa).

The first 20 residues, 1-20, serve as a signal peptide directing secretion; it reads MKSFNLLSLSLLLAIASAAA. 3 disulfide bridges follow: cysteine 46–cysteine 60, cysteine 50–cysteine 63, and cysteine 56–cysteine 70.

Belongs to the UPF0499 family.

The protein resides in the secreted. The sequence is that of UPF0499 protein NFIA_054990 from Neosartorya fischeri (strain ATCC 1020 / DSM 3700 / CBS 544.65 / FGSC A1164 / JCM 1740 / NRRL 181 / WB 181) (Aspergillus fischerianus).